The chain runs to 345 residues: Fructose-bisphosphate aldolase, plasmid (345 aa).

Ser-50 is a binding site for D-glyceraldehyde 3-phosphate. Asp-83 (proton donor) is an active-site residue. 4 residues coordinate Zn(2+): His-84, Asp-105, Glu-142, and His-198. Gly-199 is a dihydroxyacetone phosphate binding site. Position 232 (His-232) interacts with Zn(2+). Residues 233–235 (GSS) and 275–278 (NIDT) each bind dihydroxyacetone phosphate.

Belongs to the class II fructose-bisphosphate aldolase family. In terms of assembly, homodimer. The cofactor is Zn(2+).

It carries out the reaction beta-D-fructose 1,6-bisphosphate = D-glyceraldehyde 3-phosphate + dihydroxyacetone phosphate. The protein operates within carbohydrate biosynthesis; Calvin cycle. It functions in the pathway carbohydrate degradation; glycolysis; D-glyceraldehyde 3-phosphate and glycerone phosphate from D-glucose: step 4/4. In terms of biological role, catalyzes the aldol condensation of dihydroxyacetone phosphate (DHAP or glycerone-phosphate) with glyceraldehyde 3-phosphate (G3P) to form fructose 1,6-bisphosphate (FBP) in gluconeogenesis and the reverse reaction in glycolysis. The protein is Fructose-bisphosphate aldolase, plasmid (cbbAP) of Cupriavidus necator (strain ATCC 17699 / DSM 428 / KCTC 22496 / NCIMB 10442 / H16 / Stanier 337) (Ralstonia eutropha).